Reading from the N-terminus, the 411-residue chain is Argininosuccinate lyase (411 aa).

Belongs to the lyase 1 family. Argininosuccinate lyase subfamily.

The protein resides in the cytoplasm. It carries out the reaction 2-(N(omega)-L-arginino)succinate = fumarate + L-arginine. Its pathway is amino-acid biosynthesis; L-arginine biosynthesis; L-arginine from L-ornithine and carbamoyl phosphate: step 3/3. This is Argininosuccinate lyase from Legionella pneumophila (strain Lens).